We begin with the raw amino-acid sequence, 63 residues long: Toxin Cn11 (63 aa).

The 62-residue stretch at 2–63 (RDGYPVDEKG…KVWTYETNTC (62 aa)) folds into the LCN-type CS-alpha/beta domain. 4 disulfides stabilise this stretch: C12/C63, C16/C37, C23/C44, and C27/C46.

This sequence belongs to the long (4 C-C) scorpion toxin superfamily. Sodium channel inhibitor family. As to expression, expressed by the venom gland.

The protein localises to the secreted. First blocker of sodium channels (Nav) found in scorpions. Is lethal to crustaceans (Cambarellus montezumae), less toxic to insects (crickets) and non-toxic to mammals (mice) at the doses assayed. This Centruroides noxius (Mexican scorpion) protein is Toxin Cn11.